The primary structure comprises 578 residues: Aspartate--tRNA ligase (578 aa).

Glu169 lines the L-aspartate pocket. The interval 191–194 is aspartate; that stretch reads QTFK. An L-aspartate-binding site is contributed by Arg213. ATP is bound by residues 213 to 215 and Gln222; that span reads RDE. His440 contacts L-aspartate. An ATP-binding site is contributed by Glu474. Position 481 (Arg481) interacts with L-aspartate. Position 526–529 (526–529) interacts with ATP; the sequence is GLDR.

The protein belongs to the class-II aminoacyl-tRNA synthetase family. Type 1 subfamily. As to quaternary structure, homodimer.

The protein localises to the cytoplasm. The enzyme catalyses tRNA(Asp) + L-aspartate + ATP = L-aspartyl-tRNA(Asp) + AMP + diphosphate. In terms of biological role, catalyzes the attachment of L-aspartate to tRNA(Asp) in a two-step reaction: L-aspartate is first activated by ATP to form Asp-AMP and then transferred to the acceptor end of tRNA(Asp). The polypeptide is Aspartate--tRNA ligase (Ureaplasma parvum serovar 3 (strain ATCC 700970)).